Here is a 197-residue protein sequence, read N- to C-terminus: uncharacterized protein (197 aa).

A signal peptide spans 1–19 (MKLASLLVGSLMLAVPALA).

Its subcellular location is the secreted. This is an uncharacterized protein from Arthroderma benhamiae (strain ATCC MYA-4681 / CBS 112371) (Trichophyton mentagrophytes).